Here is a 748-residue protein sequence, read N- to C-terminus: Signal transducer and activator of transcription 4 (748 aa).

The SH2 domain occupies 569–664; it reads WIDGYVMGFV…ENPLKYLYPD (96 aa). Lysine 667 bears the N6-acetyllysine mark. Phosphotyrosine; by JAK is present on tyrosine 693. The residue at position 721 (serine 721) is a Phosphoserine; by MAP2K6.

The protein belongs to the transcription factor STAT family. In terms of assembly, forms a homodimer or a heterodimer with a related family member. Interacts with ARL2BP. The SH2 domain interacts, in vitro, with IL12RB2 via a short cytoplasmic domain. Interacts with STAT1. Interacts with JUN; this complex efficiently interacts with the AP-1-related sequence of the IFN-gamma. Post-translationally, acetylation at Lys-667 is required for JAK2-mediated phosphorylation and activation of STAT4. In terms of processing, tyrosine phosphorylated upon IL12 and IFN-alpha activation, but not by IFN-gamma in T-lymphocytes and NK cells. Serine phosphorylation is required for maximal transcriptional activity but not for DNA binding. Phosphorylation by MAP2K6 at Ser-721 is required for full transcriptional activity induced by IL12. However this serine phosphorylation is not required for cell proliferation although critical for IFN-gamma production.

The protein resides in the cytoplasm. Its subcellular location is the nucleus. Transcriptional regulator mainly expressed in hematopoietic cells that plays a critical role in cellular growth, differentiation and immune response. Plays a key role in the differentiation of T-helper 1 cells and the production of interferon-gamma. Also participates in multiple neutrophil functions including chemotaxis and production of the neutrophil extracellular traps. After IL12 binding to its receptor IL12RB2, STAT4 interacts with the intracellular domain of IL12RB2 and becomes tyrosine phosphorylated. Phosphorylated STAT4 then homodimerizes and migrates to the nucleus where it can recognize STAT target sequences present in IL12 responsive genes. Although IL12 appears to be the predominant activating signal, STAT4 can also be phosphorylated and activated in response to IFN-gamma stimulation via JAK1 and TYK2 and in response to different interleukins including IL23, IL2 and IL35. Transcription activation of IFN-gamma gene is mediated by interaction with JUN that forms a complex that efficiently interacts with the AP-1-related sequence of the IFN-gamma promoter. In response to IFN-alpha/beta signaling, acts as a transcriptional repressor and suppresses IL5 and IL13 mRNA expression during response to T-cell receptor (TCR) activation. The polypeptide is Signal transducer and activator of transcription 4 (STAT4) (Homo sapiens (Human)).